Reading from the N-terminus, the 208-residue chain is Large ribosomal subunit protein uL4 (208 aa).

The tract at residues 51 to 79 (AKERAEVSFSTKKLKKQKGTGGARAGSRK) is disordered.

Belongs to the universal ribosomal protein uL4 family. In terms of assembly, part of the 50S ribosomal subunit.

Functionally, one of the primary rRNA binding proteins, this protein initially binds near the 5'-end of the 23S rRNA. It is important during the early stages of 50S assembly. It makes multiple contacts with different domains of the 23S rRNA in the assembled 50S subunit and ribosome. Its function is as follows. Forms part of the polypeptide exit tunnel. The protein is Large ribosomal subunit protein uL4 of Cytophaga hutchinsonii (strain ATCC 33406 / DSM 1761 / CIP 103989 / NBRC 15051 / NCIMB 9469 / D465).